The following is a 373-amino-acid chain: DNA primase small subunit PriS (373 aa).

Catalysis depends on residues aspartate 95, aspartate 97, and aspartate 281.

Belongs to the eukaryotic-type primase small subunit family. Heterodimer of a small subunit (PriS) and a large subunit (PriL). The cofactor is Mg(2+). Mn(2+) is required as a cofactor.

Functionally, catalytic subunit of DNA primase, an RNA polymerase that catalyzes the synthesis of short RNA molecules used as primers for DNA polymerase during DNA replication. The small subunit contains the primase catalytic core and has DNA synthesis activity on its own. Binding to the large subunit stabilizes and modulates the activity, increasing the rate of DNA synthesis while decreasing the length of the DNA fragments, and conferring RNA synthesis capability. The DNA polymerase activity may enable DNA primase to also catalyze primer extension after primer synthesis. May also play a role in DNA repair. This is DNA primase small subunit PriS from Nitrosopumilus maritimus (strain SCM1).